A 114-amino-acid polypeptide reads, in one-letter code: Ribonuclease U2 (114 aa).

3 disulfides stabilise this stretch: Cys-1-Cys-54, Cys-9-Cys-113, and Cys-55-Cys-96. 6 residues coordinate Ca(2+): Asp-29, Val-30, Ala-31, Asn-32, Asp-37, and Tyr-39. A substrate-binding site is contributed by 39 to 49 (YPHQYYDEASE). Residue His-41 is part of the active site. Glu-62 acts as the Proton acceptor in catalysis. Arg-85 contributes to the substrate binding site. The active-site Proton donor is the His-101. Residue 108–110 (DGF) coordinates substrate.

It belongs to the ribonuclease U2 family.

It catalyses the reaction [RNA] containing adenosine + H2O = an [RNA fragment]-3'-adenosine-3'-phosphate + a 5'-hydroxy-ribonucleotide-3'-[RNA fragment].. The enzyme catalyses [RNA] containing guanosine + H2O = an [RNA fragment]-3'-guanosine-3'-phosphate + a 5'-hydroxy-ribonucleotide-3'-[RNA fragment].. This Ustilago sphaerogena (Smut fungus) protein is Ribonuclease U2 (RNU2).